We begin with the raw amino-acid sequence, 477 residues long: Dihydrolipoyl dehydrogenase 3 (477 aa).

FAD is bound by residues Glu39–Cys47, Lys56, and Ala118. The cysteines at positions 47 and 52 are disulfide-linked. NAD(+) contacts are provided by residues Gly186–Ile190, Glu209, and Ala279–Arg282. FAD is bound by residues Asp322 and Ala330. The active-site Proton acceptor is His454.

This sequence belongs to the class-I pyridine nucleotide-disulfide oxidoreductase family. As to quaternary structure, homodimer. It depends on FAD as a cofactor.

The protein resides in the cytoplasm. It catalyses the reaction N(6)-[(R)-dihydrolipoyl]-L-lysyl-[protein] + NAD(+) = N(6)-[(R)-lipoyl]-L-lysyl-[protein] + NADH + H(+). The chain is Dihydrolipoyl dehydrogenase 3 (lpdA3) from Haloarcula marismortui (strain ATCC 43049 / DSM 3752 / JCM 8966 / VKM B-1809) (Halobacterium marismortui).